The sequence spans 550 residues: Glutamyl-tRNA(Gln) amidotransferase subunit A, mitochondrial (550 aa).

Residues K79 and S171 each act as charge relay system in the active site. The Acyl-ester intermediate role is filled by S195. Residues 371 to 390 (EKDENKVDNDNDDDDDVDEN) are disordered.

It belongs to the amidase family. GatA subfamily. In terms of assembly, subunit of the heterotrimeric GatCAB amidotransferase (AdT) complex, composed of A, B and C subunits.

It is found in the mitochondrion. It carries out the reaction L-glutamyl-tRNA(Gln) + L-glutamine + ATP + H2O = L-glutaminyl-tRNA(Gln) + L-glutamate + ADP + phosphate + H(+). In terms of biological role, allows the formation of correctly charged Gln-tRNA(Gln) through the transamidation of misacylated Glu-tRNA(Gln) in the mitochondria. The reaction takes place in the presence of glutamine and ATP through an activated gamma-phospho-Glu-tRNA(Gln). The chain is Glutamyl-tRNA(Gln) amidotransferase subunit A, mitochondrial from Dictyostelium discoideum (Social amoeba).